Consider the following 309-residue polypeptide: Anamorsin homolog (309 aa).

Positions 4–169 (VSPGHSVLLL…SYEVGSSAQL (166 aa)) are N-terminal SAM-like domain. The interval 170–218 (TLSFAKKKQVEKPKLDENTAKIWSLSAVDMNDDDIDLLDPDELLDEEDL) is linker. The [2Fe-2S] cluster site is built by cysteine 230, cysteine 242, cysteine 245, and cysteine 247. A fe-S binding site A region spans residues 230–247 (CGTGGDTKKRKACKNCTC). Residues cysteine 270, cysteine 273, cysteine 281, and cysteine 284 each contribute to the [4Fe-4S] cluster site. 2 short sequence motifs (cx2C motif) span residues 270-273 (CGNC) and 281-284 (CASC). The segment at 270–284 (CGNCYLGDAFRCASC) is fe-S binding site B.

It belongs to the anamorsin family. As to quaternary structure, monomer. The cofactor is [2Fe-2S] cluster. [4Fe-4S] cluster serves as cofactor.

The protein resides in the cytoplasm. Its subcellular location is the mitochondrion intermembrane space. Its function is as follows. Component of the cytosolic iron-sulfur (Fe-S) protein assembly (CIA) machinery. Required for the maturation of extramitochondrial Fe-S proteins. Part of an electron transfer chain functioning in an early step of cytosolic Fe-S biogenesis, facilitating the de novo assembly of a [4Fe-4S] cluster on the cytosolic Fe-S scaffold complex. Electrons are transferred from NADPH via a FAD- and FMN-containing diflavin oxidoreductase. Together with the diflavin oxidoreductase, also required for the assembly of the diferric tyrosyl radical cofactor of ribonucleotide reductase (RNR), probably by providing electrons for reduction during radical cofactor maturation in the catalytic small subunit. In Branchiostoma floridae (Florida lancelet), this protein is Anamorsin homolog.